Consider the following 169-residue polypeptide: Small ribosomal subunit protein bS18c (169 aa).

A disordered region spans residues 1 to 61 (MYTSKQPFLK…RRPRIGPGDR (61 aa)). Residues 27 to 55 (QTFRKSKQTFRKFKQPFRKSKQPFRRRPR) are compositionally biased toward basic residues.

The protein belongs to the bacterial ribosomal protein bS18 family. In terms of assembly, part of the 30S ribosomal subunit.

It localises to the plastid. Its subcellular location is the chloroplast. This Agrostis stolonifera (Creeping bentgrass) protein is Small ribosomal subunit protein bS18c.